Consider the following 580-residue polypeptide: Laccase-6 (580 aa).

A signal peptide spans 1–22 (MSCSWMIPVFAILAFVASAAQA). Plastocyanin-like domains follow at residues 30-148 (NVAT…PRRA) and 158-317 (EEKT…YVDA). N44 and N78 each carry an N-linked (GlcNAc...) asparagine glycan. Residues H82, H84, H127, and H129 each contribute to the Cu cation site. N-linked (GlcNAc...) asparagine glycosylation is found at N306, N335, N385, N397, and N462. Residues 424–564 (DFPDQPPVAF…AMVFEVESGP (141 aa)) enclose the Plastocyanin-like 3 domain. 7 residues coordinate Cu cation: H480, H483, H485, H543, C544, H545, and H549.

It belongs to the multicopper oxidase family. Cu cation is required as a cofactor.

The protein resides in the secreted. It localises to the extracellular space. The protein localises to the apoplast. The enzyme catalyses 4 hydroquinone + O2 = 4 benzosemiquinone + 2 H2O. In terms of biological role, lignin degradation and detoxification of lignin-derived products. The protein is Laccase-6 (LAC6) of Oryza sativa subsp. japonica (Rice).